The sequence spans 178 residues: Adenine phosphoribosyltransferase (178 aa).

It belongs to the purine/pyrimidine phosphoribosyltransferase family. In terms of assembly, homodimer.

The protein resides in the cytoplasm. The catalysed reaction is AMP + diphosphate = 5-phospho-alpha-D-ribose 1-diphosphate + adenine. It participates in purine metabolism; AMP biosynthesis via salvage pathway; AMP from adenine: step 1/1. Functionally, catalyzes a salvage reaction resulting in the formation of AMP, that is energically less costly than de novo synthesis. The protein is Adenine phosphoribosyltransferase of Erythrobacter litoralis (strain HTCC2594).